A 205-amino-acid chain; its full sequence is MATGPRYKVPMRRRREVRTDYHQRLRLLKSGKPRLVARVSNRHVRAQLITPGPDGDETHVAASSEHLSEYGWEAPTGNLPSAYLTGYLAGMRAIEAGLDEAVLDIGLNTATPGNKVFVVQEGAIDAGVSIPHNESVLADWSRNRGEHIAAYAEQRDEPLYNSDFDATTLPEHFDTVLETIQDADITMNTDADTDNNNSQSVGDNE.

This sequence belongs to the universal ribosomal protein uL18 family. As to quaternary structure, part of the 50S ribosomal subunit. Contacts the 5S and 23S rRNAs.

Its function is as follows. This is one of the proteins that bind and probably mediate the attachment of the 5S RNA into the large ribosomal subunit, where it forms part of the central protuberance. The sequence is that of Large ribosomal subunit protein uL18 from Haloquadratum walsbyi (strain DSM 16790 / HBSQ001).